Consider the following 339-residue polypeptide: 4-hydroxy-2-oxovalerate aldolase (339 aa).

Residues 8–260 form the Pyruvate carboxyltransferase domain; sequence IILHDMCLRD…STDVDVFKLM (253 aa). 16 to 17 is a binding site for substrate; the sequence is RD. Residue aspartate 17 coordinates Mn(2+). Catalysis depends on histidine 20, which acts as the Proton acceptor. Substrate is bound by residues serine 170 and histidine 199. The Mn(2+) site is built by histidine 199 and histidine 201. Tyrosine 290 serves as a coordination point for substrate.

This sequence belongs to the 4-hydroxy-2-oxovalerate aldolase family.

The enzyme catalyses (S)-4-hydroxy-2-oxopentanoate = acetaldehyde + pyruvate. This chain is 4-hydroxy-2-oxovalerate aldolase, found in Shewanella woodyi (strain ATCC 51908 / MS32).